We begin with the raw amino-acid sequence, 327 residues long: MQKVFIAPTHYKRIDEFLAKELQISKNQVLNLIKEGLVFCQKKEVKKGGLALKEGDAITLLTPKIVPKPLKKELDLEIEVIFEDEDLLVLNKPPNLVVHKAPSVKEPTLVDWLKSQNYELSNLGLKERYGIVHRLDKDTSGGIVIAKNNFTHVCLSEQLKTKMMGRYYIALLSTPLKEEKMSVECYLTRNPNNRLKMIALKAAKKEKSRYSKSEFTSLLTSQNGMDLIGAKLFTGRTHQIRAHLEYLNRHIIGDNLYGLNGVLSKEEIRIMLHAYLIEFKHPRSEQKLRFKVPLLKDMLEYLKKVFDKENLDEVLDEEKILHAFIAK.

The S4 RNA-binding domain occupies 12 to 79; the sequence is KRIDEFLAKE…LKKELDLEIE (68 aa). The active site involves D136.

The protein belongs to the pseudouridine synthase RluA family.

The enzyme catalyses a uridine in RNA = a pseudouridine in RNA. This is an uncharacterized protein from Helicobacter pylori (strain J99 / ATCC 700824) (Campylobacter pylori J99).